Here is a 204-residue protein sequence, read N- to C-terminus: MNIDIFLFYLFSIFALISSLMVIGLTNAVHSVLFLILVFCNVAGLLLLLGPEFFSFMLIIVYVGAIAVLFLFVVMMLNIKLKSTNISFSSLWPIGILTFVILLSQFFSSFYELDLVKFQGKELFFISWANENSNLTNIKVIGKVLYTHFNLLFLICGLILLVAMIGVIVLTMHQRVDVKKQQIALQLARTAPNVIKFIILRRKR.

The next 5 helical transmembrane spans lie at 5 to 25, 29 to 49, 56 to 76, 91 to 111, and 151 to 171; these read IFLFYLFSIFALISSLMVIGL, VHSVLFLILVFCNVAGLLLLL, FMLIIVYVGAIAVLFLFVVMM, LWPIGILTFVILLSQFFSSFY, and LLFLICGLILLVAMIGVIVLT.

The protein belongs to the complex I subunit 6 family.

It is found in the mitochondrion membrane. It carries out the reaction a ubiquinone + NADH + 5 H(+)(in) = a ubiquinol + NAD(+) + 4 H(+)(out). Functionally, core subunit of the mitochondrial membrane respiratory chain NADH dehydrogenase (Complex I) that is believed to belong to the minimal assembly required for catalysis. Complex I functions in the transfer of electrons from NADH to the respiratory chain. The immediate electron acceptor for the enzyme is believed to be ubiquinone. This Chondrus crispus (Carrageen Irish moss) protein is NADH-ubiquinone oxidoreductase chain 6 (ND6).